A 474-amino-acid chain; its full sequence is C6 finger domain transcription factor aclZ (474 aa).

Positions 42–69 form a DNA-binding region, zn(2)-C6 fungal-type; it reads CNQCHAAKVRCSGERTGCDRCNNLQYQC. 2 disordered regions span residues 85–148 and 177–206; these read RGNK…SHSA and MSSDQDPSRSRGHSLQAPSHSGHSIADSHT. A compositionally biased stretch (polar residues) spans 90–105; that stretch reads VRTTTEALQRPATAST. Residues 117 to 138 show a composition bias toward basic and acidic residues; the sequence is TDQRSENDPLSRSDFGEQDAAH.

The protein resides in the nucleus. In terms of biological role, transcription factor that specifically regulates the gene cluster that mediates the biosynthesis of aspirochlorine (or antibiotic A30641), an unusual halogenated spiro compound with distinctive antifungal properties due to selective inhibition of protein biosynthesis, and which is also active against bacteria, viruses, and murine tumor cells. This chain is C6 finger domain transcription factor aclZ, found in Aspergillus oryzae (strain ATCC 42149 / RIB 40) (Yellow koji mold).